The following is a 145-amino-acid chain: Small ribosomal subunit protein eS19 (145 aa).

A disordered region spans residues 120–145; the sequence is GGRRISENGQRDLDRIAAQTLEEDDE. Basic and acidic residues predominate over residues 123-134; sequence RISENGQRDLDR.

The protein belongs to the eukaryotic ribosomal protein eS19 family. As to quaternary structure, component of the small ribosomal subunit. Mature ribosomes consist of a small (40S) and a large (60S) subunit. The 40S subunit contains about 32 different proteins and 1 molecule of RNA (18S). The 60S subunit contains 45 different proteins and 3 molecules of RNA (25S, 5.8S and 5S).

Its subcellular location is the cytoplasm. Functionally, component of the ribosome, a large ribonucleoprotein complex responsible for the synthesis of proteins in the cell. The small ribosomal subunit (SSU) binds messenger RNAs (mRNAs) and translates the encoded message by selecting cognate aminoacyl-transfer RNA (tRNA) molecules. The large subunit (LSU) contains the ribosomal catalytic site termed the peptidyl transferase center (PTC), which catalyzes the formation of peptide bonds, thereby polymerizing the amino acids delivered by tRNAs into a polypeptide chain. The nascent polypeptides leave the ribosome through a tunnel in the LSU and interact with protein factors that function in enzymatic processing, targeting, and the membrane insertion of nascent chains at the exit of the ribosomal tunnel. RPS19A is required for proper maturation of the small (40S) ribosomal subunit. The polypeptide is Small ribosomal subunit protein eS19 (RPS19A) (Candida albicans (strain SC5314 / ATCC MYA-2876) (Yeast)).